A 623-amino-acid polypeptide reads, in one-letter code: Membrane protein insertase YidC (623 aa).

5 helical membrane passes run leucine 8–proline 28, methionine 379–tyrosine 399, leucine 449–isoleucine 469, threonine 507–leucine 527, and isoleucine 543–valine 563. A compositionally biased stretch (low complexity) spans lysine 601–proline 617. The interval lysine 601–proline 623 is disordered.

It belongs to the OXA1/ALB3/YidC family. Type 1 subfamily. In terms of assembly, interacts with the Sec translocase complex via SecD. Specifically interacts with transmembrane segments of nascent integral membrane proteins during membrane integration.

Its subcellular location is the cell inner membrane. In terms of biological role, required for the insertion and/or proper folding and/or complex formation of integral membrane proteins into the membrane. Involved in integration of membrane proteins that insert both dependently and independently of the Sec translocase complex, as well as at least some lipoproteins. Aids folding of multispanning membrane proteins. The chain is Membrane protein insertase YidC from Cereibacter sphaeroides (strain ATCC 17029 / ATH 2.4.9) (Rhodobacter sphaeroides).